A 1243-amino-acid chain; its full sequence is Probable phospholipid-transporting ATPase 7 (1243 aa).

Topologically, residues Met1–Leu74 are cytoplasmic. Residues Pro75–Leu96 form a helical membrane-spanning segment. Over Ser97–Pro100 the chain is Extracellular. Residues Leu101–Lys123 traverse the membrane as a helical segment. At Glu124–Ile305 the chain is on the cytoplasmic side. Residues Ile306–Met327 form a helical membrane-spanning segment. The Extracellular portion of the chain corresponds to Thr328 to His359. The helical transmembrane segment at Leu360 to Val377 threads the bilayer. Residues Ser378–Ala941 lie on the Cytoplasmic side of the membrane. Catalysis depends on Asp425, which acts as the 4-aspartylphosphate intermediate. Lys623 is covalently cross-linked (Glycyl lysine isopeptide (Lys-Gly) (interchain with G-Cter in ubiquitin)). Mg(2+)-binding residues include Asp886 and Asp890. Residues Gln942–Phe961 form a helical membrane-spanning segment. At Glu962–Asp975 the chain is on the extracellular side. A helical transmembrane segment spans residues Ser976–Val995. The Cytoplasmic segment spans residues Phe996 to Arg1025. The helical transmembrane segment at Ile1026–Phe1048 threads the bilayer. The Extracellular segment spans residues His1049–Asp1061. A helical transmembrane segment spans residues Met1062–Thr1084. Residues Met1085–Trp1090 are Cytoplasmic-facing. The helical transmembrane segment at Ile1091–Gly1111 threads the bilayer. Over Met1112–Thr1128 the chain is Extracellular. The helical transmembrane segment at Leu1129–Tyr1153 threads the bilayer. The Cytoplasmic segment spans residues Ile1154–Ser1243.

This sequence belongs to the cation transport ATPase (P-type) (TC 3.A.3) family. Type IV subfamily.

The protein localises to the cell membrane. Its subcellular location is the endomembrane system. It carries out the reaction ATP + H2O + phospholipidSide 1 = ADP + phosphate + phospholipidSide 2.. Functionally, involved in transport of phospholipids and in regulation of pollen plasma membrane lipid asymmetry. This Arabidopsis thaliana (Mouse-ear cress) protein is Probable phospholipid-transporting ATPase 7.